We begin with the raw amino-acid sequence, 130 residues long: uncharacterized protein (130 aa).

This is an uncharacterized protein from Enterobacteria phage T4 (Bacteriophage T4).